Reading from the N-terminus, the 233-residue chain is Phosphoglycolate phosphatase 2 (233 aa).

The active-site Nucleophile is the D13. Mg(2+)-binding residues include D13 and D15. Residue K152 coordinates substrate. Mg(2+) is bound by residues D174 and D178.

The protein belongs to the archaeal SPP-like hydrolase family. Mg(2+) is required as a cofactor.

The enzyme catalyses 2-phosphoglycolate + H2O = glycolate + phosphate. Its function is as follows. Catalyzes the dephosphorylation of 2-phosphoglycolate. This chain is Phosphoglycolate phosphatase 2, found in Saccharolobus solfataricus (strain ATCC 35092 / DSM 1617 / JCM 11322 / P2) (Sulfolobus solfataricus).